The sequence spans 493 residues: MSLLKMEYNLYAELKKMTCGQPLSLFNEDGDFVEVEPGSSFKFLIPKGFYASPSVKTSLVFETLTTTDNKITSINPTNAPKLYPLQRKVVSEVVSNMRKMIESKRPLYITLHLACGFGKTITTCYLMATHGRKTVICVPNKMLIHQWKTQVEAVGLEHKISIDGVSSLLKELKTQSPDVLIVVSRHLTNDAFCKYINKHYDLFILDESHTYNLMNNTAVTRFLAYYPPMMCYFLTATPRPSNRIYCNSIINIAKLSDLKKTIYAVDSFFEPYSTDNIRHMIKRLDGPSNKYHIYTEKLLSVDEPRNQLILNTLVEEFKSGTINRILVITKLREHMVFFYKRLLDFFGSEVVFIGDAQNRRTPDMVKSIKELNRFIFVSTLFYSGTGLDIPSLDSLFICSAVINNMQIEQLLGRVCRETELLDRTVYVFPSTSIKEIKYMIGNFVQRIISLSVDKLGFKQKSYRKHQESDPTSVCTTSSREERVLNRIFNSQNR.

The 157-residue stretch at 100-256 (MIESKRPLYI…NSIINIAKLS (157 aa)) folds into the Helicase ATP-binding domain. 113 to 120 (LACGFGKT) contacts ATP. The DESH box motif lies at 206–209 (DESH).

Belongs to the helicase family. Poxviruses subfamily. As to quaternary structure, interacts with G2. Might be part of a transcription complex composed at least of G2, A18, and H5.

Its subcellular location is the virion. Functionally, DNA helicase which seems to act as a postreplicative transcription termination factor. Involved in ATP-dependent release of nascent RNA. Forms a stable complex with single-stranded DNA, and to a lesser extent RNA. The sequence is that of Transcript termination protein A18 from Homo sapiens (Human).